Consider the following 557-residue polypeptide: Formate--tetrahydrofolate ligase (557 aa).

ATP is bound at residue 65-72; sequence TPAGEGKT.

This sequence belongs to the formate--tetrahydrofolate ligase family.

The enzyme catalyses (6S)-5,6,7,8-tetrahydrofolate + formate + ATP = (6R)-10-formyltetrahydrofolate + ADP + phosphate. It functions in the pathway one-carbon metabolism; tetrahydrofolate interconversion. This is Formate--tetrahydrofolate ligase from Methylorubrum extorquens (strain PA1) (Methylobacterium extorquens).